The sequence spans 696 residues: Glycine--tRNA ligase beta subunit (696 aa).

It belongs to the class-II aminoacyl-tRNA synthetase family. Tetramer of two alpha and two beta subunits.

The protein resides in the cytoplasm. It carries out the reaction tRNA(Gly) + glycine + ATP = glycyl-tRNA(Gly) + AMP + diphosphate. This Nitratidesulfovibrio vulgaris (strain DP4) (Desulfovibrio vulgaris) protein is Glycine--tRNA ligase beta subunit.